The primary structure comprises 305 residues: Oxygen-dependent coproporphyrinogen-III oxidase (305 aa).

A substrate-binding site is contributed by Ser98. 2 residues coordinate a divalent metal cation: His102 and His112. His112 functions as the Proton donor in the catalytic mechanism. 114-116 (NVR) contributes to the substrate binding site. 2 residues coordinate a divalent metal cation: His151 and His181. Residues 246–281 (YVEFNLVYDRGTLFGLQSGGRTESILMSMPPLARWE) form an important for dimerization region. A substrate-binding site is contributed by 264-266 (GGR).

Belongs to the aerobic coproporphyrinogen-III oxidase family. In terms of assembly, homodimer. Requires a divalent metal cation as cofactor.

Its subcellular location is the cytoplasm. The catalysed reaction is coproporphyrinogen III + O2 + 2 H(+) = protoporphyrinogen IX + 2 CO2 + 2 H2O. Its pathway is porphyrin-containing compound metabolism; protoporphyrin-IX biosynthesis; protoporphyrinogen-IX from coproporphyrinogen-III (O2 route): step 1/1. In terms of biological role, involved in the heme biosynthesis. Catalyzes the aerobic oxidative decarboxylation of propionate groups of rings A and B of coproporphyrinogen-III to yield the vinyl groups in protoporphyrinogen-IX. In Vibrio vulnificus (strain YJ016), this protein is Oxygen-dependent coproporphyrinogen-III oxidase.